The chain runs to 328 residues: GMP reductase (328 aa).

Cys176 functions as the Thioimidate intermediate in the catalytic mechanism. 205-228 (IIADGGIRTHGDVAKSIRFGATMV) lines the NADP(+) pocket.

This sequence belongs to the IMPDH/GMPR family. GuaC type 2 subfamily.

It carries out the reaction IMP + NH4(+) + NADP(+) = GMP + NADPH + 2 H(+). Catalyzes the irreversible NADPH-dependent deamination of GMP to IMP. It functions in the conversion of nucleobase, nucleoside and nucleotide derivatives of G to A nucleotides, and in maintaining the intracellular balance of A and G nucleotides. This is GMP reductase from Bacillus cereus (strain ATCC 14579 / DSM 31 / CCUG 7414 / JCM 2152 / NBRC 15305 / NCIMB 9373 / NCTC 2599 / NRRL B-3711).